A 36-amino-acid chain; its full sequence is Glucagon-2 (36 aa).

Belongs to the glucagon family.

The protein resides in the secreted. In terms of biological role, glucagon plays a key role in glucose metabolism and homeostasis. Regulates blood glucose by increasing gluconeogenesis and decreasing glycolysis. The chain is Glucagon-2 from Huso dauricus (Kaluga sturgeon).